Here is a 179-residue protein sequence, read N- to C-terminus: Ribosome maturation factor RimM (179 aa).

Positions 100–176 constitute a PRC barrel domain; sequence KEEFHLLELI…FLIINPPNGL (77 aa).

This sequence belongs to the RimM family. As to quaternary structure, binds ribosomal protein uS19.

Its subcellular location is the cytoplasm. An accessory protein needed during the final step in the assembly of 30S ribosomal subunit, possibly for assembly of the head region. Essential for efficient processing of 16S rRNA. May be needed both before and after RbfA during the maturation of 16S rRNA. It has affinity for free ribosomal 30S subunits but not for 70S ribosomes. In Prochlorococcus marinus (strain AS9601), this protein is Ribosome maturation factor RimM.